The primary structure comprises 129 residues: Small ribosomal subunit protein uS11 (129 aa).

This sequence belongs to the universal ribosomal protein uS11 family. Part of the 30S ribosomal subunit. Interacts with proteins S7 and S18. Binds to IF-3.

In terms of biological role, located on the platform of the 30S subunit, it bridges several disparate RNA helices of the 16S rRNA. Forms part of the Shine-Dalgarno cleft in the 70S ribosome. The chain is Small ribosomal subunit protein uS11 from Azorhizobium caulinodans (strain ATCC 43989 / DSM 5975 / JCM 20966 / LMG 6465 / NBRC 14845 / NCIMB 13405 / ORS 571).